Here is a 407-residue protein sequence, read N- to C-terminus: 1-deoxy-D-xylulose 5-phosphate reductoisomerase (407 aa).

NADPH contacts are provided by threonine 25, glycine 26, serine 27, isoleucine 28, asparagine 53, and asparagine 136. Lysine 137 serves as a coordination point for 1-deoxy-D-xylulose 5-phosphate. Glutamate 138 contacts NADPH. Aspartate 162 serves as a coordination point for Mn(2+). Positions 163, 164, 188, and 211 each coordinate 1-deoxy-D-xylulose 5-phosphate. Position 164 (glutamate 164) interacts with Mn(2+). Glycine 217 contacts NADPH. 1-deoxy-D-xylulose 5-phosphate contacts are provided by serine 224, asparagine 229, lysine 230, and glutamate 233. Residue glutamate 233 coordinates Mn(2+).

The protein belongs to the DXR family. The cofactor is Mg(2+). Mn(2+) serves as cofactor.

The enzyme catalyses 2-C-methyl-D-erythritol 4-phosphate + NADP(+) = 1-deoxy-D-xylulose 5-phosphate + NADPH + H(+). It functions in the pathway isoprenoid biosynthesis; isopentenyl diphosphate biosynthesis via DXP pathway; isopentenyl diphosphate from 1-deoxy-D-xylulose 5-phosphate: step 1/6. Functionally, catalyzes the NADPH-dependent rearrangement and reduction of 1-deoxy-D-xylulose-5-phosphate (DXP) to 2-C-methyl-D-erythritol 4-phosphate (MEP). In Nitrobacter winogradskyi (strain ATCC 25391 / DSM 10237 / CIP 104748 / NCIMB 11846 / Nb-255), this protein is 1-deoxy-D-xylulose 5-phosphate reductoisomerase.